The chain runs to 376 residues: Beta-centractin (376 aa).

Methionine 1 carries the N-acetylmethionine modification. Residue tyrosine 4 is modified to 3'-nitrotyrosine.

It belongs to the actin family. ARP1 subfamily.

The protein localises to the cytoplasm. It is found in the cytoskeleton. The protein resides in the microtubule organizing center. It localises to the centrosome. In terms of biological role, component of a multi-subunit complex involved in microtubule based vesicle motility. It is associated with the centrosome. The sequence is that of Beta-centractin (ACTR1B) from Bos taurus (Bovine).